The following is a 242-amino-acid chain: Flavin prenyltransferase PAD1, mitochondrial (242 aa).

Residues 1-58 (MLLFPRRTNIAFFKTTGIFANFPLLGRTITTSPSFLTHKLSKEVTRASTSPPRPKRIV) constitute a mitochondrion transit peptide. Residues 63-65 (GAT), Ser-89, 140-143 (SMKS), and Arg-175 each bind FMN. Dimethylallyl phosphate is bound by residues Tyr-205 and Arg-221.

The protein belongs to the UbiX/PAD1 family. Oligomer.

It localises to the mitochondrion. It carries out the reaction dimethylallyl phosphate + FMNH2 = prenylated FMNH2 + phosphate. Its function is as follows. Flavin prenyltransferase that catalyzes the synthesis of the prenylated FMN cofactor (prenyl-FMN) for the ferulic acid decarboxylase FDC1/ubiD. The prenyltransferase is metal-independent and links a dimethylallyl moiety from dimethylallyl monophosphate (DMAP) to the flavin N5 and C6 atoms of FMN. Involved in the decarboxylation of phenylacrylic acids like ferulic acid, p-coumaric acid or cinnamic acid, producing the corresponding vinyl derivatives which play the role of aroma metabolites. Also involved in the degradation of the food preservative sorbic acid (2,4-hexadienoic acid) to a volatile hydrocarbon, 1,3-pentadiene. Not essential for ubiquinone synthesis. Can rescue Q biosynthesis in E.coli strains lacking UbiX. Has mRNA binding activity. The chain is Flavin prenyltransferase PAD1, mitochondrial from Saccharomyces cerevisiae (strain ATCC 204508 / S288c) (Baker's yeast).